Reading from the N-terminus, the 277-residue chain is Radial spoke head protein 9 homolog (277 aa).

Belongs to the flagellar radial spoke RSP9 family. Component of axonemal radial spoke complexes.

The protein localises to the cytoplasm. It is found in the cytoskeleton. The protein resides in the cilium axoneme. Its subcellular location is the flagellum axoneme. It localises to the cell projection. The protein localises to the kinocilium. Functions as part of axonemal radial spoke complexes that play an important part in the motility of sperm and cilia. Essential for both the radial spoke head assembly and the central pair microtubule stability in ependymal motile cilia. Required for motility of olfactory and neural cilia and for the structural integrity of ciliary axonemes in both 9+0 and 9+2 motile cilia. This Xenopus tropicalis (Western clawed frog) protein is Radial spoke head protein 9 homolog (rsph9).